The chain runs to 202 residues: Na(+)-translocating NADH-quinone reductase subunit E (202 aa).

6 consecutive transmembrane segments (helical) span residues 5–25 (VSLF…FLGM), 35–55 (VSTA…TVPL), 81–101 (FLGL…LEMF), 114–134 (GVFL…LFMV), 144–164 (VVYG…LAGI), and 180–200 (LGIT…FGGM).

The protein belongs to the NqrDE/RnfAE family. Composed of six subunits; NqrA, NqrB, NqrC, NqrD, NqrE and NqrF.

It localises to the cell inner membrane. The catalysed reaction is a ubiquinone + n Na(+)(in) + NADH + H(+) = a ubiquinol + n Na(+)(out) + NAD(+). NQR complex catalyzes the reduction of ubiquinone-1 to ubiquinol by two successive reactions, coupled with the transport of Na(+) ions from the cytoplasm to the periplasm. NqrA to NqrE are probably involved in the second step, the conversion of ubisemiquinone to ubiquinol. In Psychrobacter arcticus (strain DSM 17307 / VKM B-2377 / 273-4), this protein is Na(+)-translocating NADH-quinone reductase subunit E.